A 344-amino-acid polypeptide reads, in one-letter code: MATPYVPVPMPIGNSASSFTNNRNQRSSSFGSVSTSSNSSKGQLEDSSVGTCKHTNVQDQMDSASSVCGSPLIRTKFTGTDSSIEYSARPRDTEEQHPDALNWEDRPSTPTILGYEVMEERAKFTVYKILVKKSPEESWVVFRRYTDFSRLNDKLKEMFPGFRLALPPKRWFKDNYNADFLEDRQLGLQAFLQNLVAHKDIANCLAVREFLCLDDPPGPFDSLEESRAFCETLEETNYHLQRELLEKQKEVESLKKLLGEKQLHIDALETRIRTLSLEPGASLYVSRAEGGQILRVQSSVLQVNRDVLDEESRADHKPHFNSREAGSAIADIEVAQLAYNAEDD.

The segment covering 1 to 10 (MATPYVPVPM) has biased composition (pro residues). Disordered regions lie at residues 1 to 49 (MATP…DSSV) and 83 to 105 (SIEY…NWED). A compositionally biased stretch (polar residues) spans 14-26 (NSASSFTNNRNQR). Over residues 27 to 40 (SSSFGSVSTSSNSS) the composition is skewed to low complexity. The span at 88-105 (ARPRDTEEQHPDALNWED) shows a compositional bias: basic and acidic residues. Residues 105-218 (DRPSTPTILG…EFLCLDDPPG (114 aa)) enclose the PX domain. The a 1,2-diacyl-sn-glycero-3-phospho-(1D-myo-inositol-3-phosphate) site is built by R144, T146, and R184. At S222 the chain carries Phosphoserine. The stretch at 223–278 (LEESRAFCETLEETNYHLQRELLEKQKEVESLKKLLGEKQLHIDALETRIRTLSLE) forms a coiled coil.

The protein belongs to the sorting nexin family. As to quaternary structure, homooligomer. Interacts with EGFR.

It localises to the early endosome membrane. It is found in the late endosome membrane. The protein localises to the cytoplasm. Its subcellular location is the lysosome. Its function is as follows. May be involved in several stages of intracellular trafficking. Plays a role in protein transport from early to late endosomes. Plays a role in protein transport to the lysosome. Promotes degradation of EGFR after EGF signaling. The polypeptide is Sorting nexin-16 (Snx16) (Rattus norvegicus (Rat)).